Consider the following 475-residue polypeptide: Ankyrin repeat, SAM and basic leucine zipper domain-containing protein 1 (475 aa).

The span at 1–10 (MAAGALRGLA) shows a compositional bias: low complexity. Residues 1–23 (MAAGALRGLAVAGGGESSESEDD) form a disordered region. Ser17, Ser18, and Ser20 each carry phosphoserine. 6 ANK repeats span residues 45–74 (EKNE…SVDS), 78–107 (YGWT…NASF), 110–144 (DKQT…DPNV), 148–177 (RLMT…EVNT), 181–210 (NGYT…NKML), and 214–243 (DGKI…PLEG). Residues 272 to 334 (SYTAFGDLEI…KILSALKELE (63 aa)) form the SAM domain.

In terms of assembly, interacts with DDX4, PIWIL1, RANBP9 and TDRD1.

The protein resides in the cytoplasm. Plays a central role during spermatogenesis by repressing transposable elements and preventing their mobilization, which is essential for the germline integrity. Acts via the piRNA metabolic process, which mediates the repression of transposable elements during meiosis by forming complexes composed of piRNAs and Piwi proteins and governs the methylation and subsequent repression of transposons. Its association with pi-bodies suggests a participation in the primary piRNAs metabolic process. Required prior to the pachytene stage to facilitate the production of multiple types of piRNAs, including those associated with repeats involved in the regulation of retrotransposons. May act by mediating protein-protein interactions during germ cell maturation. In Otolemur garnettii (Small-eared galago), this protein is Ankyrin repeat, SAM and basic leucine zipper domain-containing protein 1 (ASZ1).